We begin with the raw amino-acid sequence, 423 residues long: Acaloleptin A (423 aa).

An N-terminal signal peptide occupies residues 1–17; that stretch reads MITKISLILFAVLLVSG. A propeptide spanning residues 18-26 is cleaved from the precursor; it reads LEEEERWKR. Disordered stretches follow at residues 28-58, 108-128, 180-203, and 355-385; these read LQPG…NTKT, INNK…DNGN, NVNN…GNTR, and SDDE…TRAD. Residues 34-43 show a composition bias toward polar residues; the sequence is NVNNNDQPWQ. Polar residues predominate over residues 180–189; sequence NVNNKDQPWQ. The segment covering 357-366 has biased composition (acidic residues); it reads DEDEEEEEDQ. The segment covering 376–385 has biased composition (basic and acidic residues); that stretch reads RGDDGNTRAD.

Belongs to the coleoptericin family. As to expression, hemolymph (at protein level). Larval fat body.

Its subcellular location is the secreted. In terms of biological role, acaloleptins A1-A4 show antibacterial activity against Gram-negative bacteria but not against Gram-positive bacteria. Acaloleptin A5 shows antibacterial activity against Gram-positive bacteria but not against Gram-negative bacteria, and may also have antifungal activity. This is Acaloleptin A from Acalolepta luxuriosa (Udo longhorn beetle).